Reading from the N-terminus, the 278-residue chain is Orotidine 5'-phosphate decarboxylase (278 aa).

Lysine 95 (proton donor) is an active-site residue.

Belongs to the OMP decarboxylase family. Type 2 subfamily.

It carries out the reaction orotidine 5'-phosphate + H(+) = UMP + CO2. Its pathway is pyrimidine metabolism; UMP biosynthesis via de novo pathway; UMP from orotate: step 2/2. The chain is Orotidine 5'-phosphate decarboxylase from Mycobacterium marinum (strain ATCC BAA-535 / M).